A 450-amino-acid chain; its full sequence is Phosphoglucosamine mutase (450 aa).

Catalysis depends on S102, which acts as the Phosphoserine intermediate. Mg(2+)-binding residues include S102, D244, D246, and D248. At S102 the chain carries Phosphoserine.

It belongs to the phosphohexose mutase family. Requires Mg(2+) as cofactor. In terms of processing, activated by phosphorylation.

It carries out the reaction alpha-D-glucosamine 1-phosphate = D-glucosamine 6-phosphate. Functionally, catalyzes the conversion of glucosamine-6-phosphate to glucosamine-1-phosphate. This Nitratidesulfovibrio vulgaris (strain DSM 19637 / Miyazaki F) (Desulfovibrio vulgaris) protein is Phosphoglucosamine mutase.